Here is a 526-residue protein sequence, read N- to C-terminus: CTP synthase (526 aa).

Positions 1 to 264 are amidoligase domain; sequence MPQRFIVVTG…HKLIAKELDI (264 aa). Ser-14 provides a ligand contact to CTP. Residue Ser-14 coordinates UTP. ATP contacts are provided by residues 15–20 and Asp-72; that span reads GIGKGI. Mg(2+)-binding residues include Asp-72 and Glu-138. Residues 145–147, 185–190, and Lys-221 contribute to the CTP site; these read DIE and KTKPTQ. UTP is bound by residues 185–190 and Lys-221; that span reads KTKPTQ. The Glutamine amidotransferase type-1 domain occupies 282-526; it reads KIGIVGKYLG…VKAAGGKIND (245 aa). Gly-342 contacts L-glutamine. Cys-369 (nucleophile; for glutamine hydrolysis) is an active-site residue. L-glutamine contacts are provided by residues 370–373, Glu-393, and Arg-451; that span reads LGMQ. Residues His-499 and Glu-501 contribute to the active site.

This sequence belongs to the CTP synthase family. As to quaternary structure, homotetramer.

It catalyses the reaction UTP + L-glutamine + ATP + H2O = CTP + L-glutamate + ADP + phosphate + 2 H(+). It carries out the reaction L-glutamine + H2O = L-glutamate + NH4(+). The enzyme catalyses UTP + NH4(+) + ATP = CTP + ADP + phosphate + 2 H(+). It functions in the pathway pyrimidine metabolism; CTP biosynthesis via de novo pathway; CTP from UDP: step 2/2. Allosterically activated by GTP, when glutamine is the substrate; GTP has no effect on the reaction when ammonia is the substrate. The allosteric effector GTP functions by stabilizing the protein conformation that binds the tetrahedral intermediate(s) formed during glutamine hydrolysis. Inhibited by the product CTP, via allosteric rather than competitive inhibition. Catalyzes the ATP-dependent amination of UTP to CTP with either L-glutamine or ammonia as the source of nitrogen. Regulates intracellular CTP levels through interactions with the four ribonucleotide triphosphates. The polypeptide is CTP synthase (Thermosipho africanus (strain TCF52B)).